Reading from the N-terminus, the 459-residue chain is Ribulose bisphosphate carboxylase (459 aa).

Asparagine 111 is a binding site for substrate. Lysine 166 functions as the Proton acceptor in the catalytic mechanism. Residue lysine 168 coordinates substrate. Mg(2+) is bound by residues lysine 191, aspartate 193, and glutamate 194. Lysine 191 is subject to N6-carboxylysine. The active-site Proton acceptor is the histidine 287. 3 residues coordinate substrate: arginine 288, histidine 321, and serine 368.

Belongs to the RuBisCO large chain family. Type II subfamily. As to quaternary structure, the complex is approximately 350 kDa when isolated from either T.denitrificans or R.sphaeroides, suggesting a homohexamer or homooctamer structure. Requires Mg(2+) as cofactor.

The enzyme catalyses 2 (2R)-3-phosphoglycerate + 2 H(+) = D-ribulose 1,5-bisphosphate + CO2 + H2O. It carries out the reaction D-ribulose 1,5-bisphosphate + O2 = 2-phosphoglycolate + (2R)-3-phosphoglycerate + 2 H(+). Functionally, ruBisCO catalyzes two reactions: the carboxylation of D-ribulose 1,5-bisphosphate, the primary event in carbon dioxide fixation, as well as the oxidative fragmentation of the pentose substrate. Both reactions occur simultaneously and in competition at the same active site. The sequence is that of Ribulose bisphosphate carboxylase (cbbM) from Thiobacillus denitrificans (strain ATCC 25259 / T1).